Reading from the N-terminus, the 438-residue chain is Protein phosphatase 2C homolog 2 (438 aa).

The PPM-type phosphatase domain occupies 23–294; that stretch reads IYGVSAMQGW…DNMTMVIIGF (272 aa). 4 residues coordinate Mn(2+): D67, G68, D236, and D285. The interval 370 to 438 is disordered; sequence VLTGSDDTEM…EKTPEESKKD (69 aa). Positions 375-387 are enriched in acidic residues; that stretch reads DDTEMFDNADEDK. Basic and acidic residues predominate over residues 398 to 438; the sequence is GKTDAKEETEAKPAPEAESSKPADGSEKKQDEKTPEESKKD.

Belongs to the PP2C family. The cofactor is Mg(2+). It depends on Mn(2+) as a cofactor.

The protein resides in the cytoplasm. Its subcellular location is the nucleus. The enzyme catalyses O-phospho-L-seryl-[protein] + H2O = L-seryl-[protein] + phosphate. It catalyses the reaction O-phospho-L-threonyl-[protein] + H2O = L-threonyl-[protein] + phosphate. Functionally, dephosphorylating regulator for many key proteins. Negatively regulates the endoplasmic reticulum unfolded protein response. The protein is Protein phosphatase 2C homolog 2 of Hypocrea jecorina (strain QM6a) (Trichoderma reesei).